Consider the following 498-residue polypeptide: Protein flp (498 aa).

Transmembrane regions (helical) follow at residues 6–26, 389–409, 433–453, and 471–491; these read LYFLSISIIILVAISIAIYIT, FNIVTVLMTTLILLAFIFSAY, LTLCLCIAIALILYALPYLIL, and LALITTLIALFSTLIVILLFL.

Its subcellular location is the cell membrane. Its precise function is unknown. Has no penicillin-binding activity and is not involved in methicillin resistance. The chain is Protein flp (flp) from Staphylococcus aureus (strain Mu50 / ATCC 700699).